A 426-amino-acid chain; its full sequence is Actin-like protein 6B (426 aa).

The interval 39 to 82 (TTVGLLAAEEGGGLELEGEKEKKGKIFHIDTNALHVPRDGAEVM) is essential for mediating its function in dendritic development; may contribute to neuronal-specific targeting.

Belongs to the actin family. In terms of assembly, component of the multiprotein chromatin-remodeling complexes SWI/SNF: SWI/SNF-A (BAF), SWI/SNF-B (PBAF) and related complexes. The canonical complex contains a catalytic subunit (either SMARCA4/BRG1/BAF190A or SMARCA2/BRM/BAF190B) and at least SMARCE1, ACTL6A/BAF53, SMARCC1/BAF155, SMARCC2/BAF170, and SMARCB1/SNF5/BAF47. Other subunits specific to each of the complexes may also be present permitting several possible combinations developmentally and tissue specific. Component of the BAF complex, which includes at least actin (ACTB), ARID1A/BAF250A, ARID1B/BAF250B, SMARCA2/BRM, SMARCA4/BRG1/BAF190A, ACTL6A/BAF53, ACTL6B/BAF53B, SMARCE1/BAF57, SMARCC1/BAF155, SMARCC2/BAF170, SMARCB1/SNF5/INI1, and one or more SMARCD1/BAF60A, SMARCD2/BAF60B, or SMARCD3/BAF60C. Component of neuron-specific chromatin remodeling complex (nBAF complex) composed of at least, ARID1A/BAF250A or ARID1B/BAF250B, SMARCD1/BAF60A or SMARCD2/BAF60B or SMARCD3/BAF60C, SMARCA2/BRM/BAF190B, SMARCA4/BRG1/BAF190A, SMARCB1/BAF47, SMARCC1/BAF155, SMARCE1/BAF57, SMARCC2/BAF170, DPF1/BAF45B, DPF3/BAF45C, ACTL6B/BAF53B and actin (ACTB). Note that the nBAF complex is polymorphic in regard to the ATPase, SMARCA2 and SMARCA4 occupying mutually exclusive positions. May be a component of the SWI/SNF-B (PBAF) chromatin remodeling complex, at least composed of SMARCA4/BRG1, SMARCB1/BAF47/SNF5, ACTL6A/BAF53A or ACTL6B/BAF53B, SMARCE1/BAF57, SMARCD1/BAF60A, SMARCD2/BAF60B, perhaps SMARCD3/BAF60C, SMARCC1/BAF155, SMARCC2/BAF170, PBRM1/BAF180, ARID2/BAF200 and actin.

It is found in the nucleus. Involved in transcriptional activation and repression of select genes by chromatin remodeling (alteration of DNA-nucleosome topology). Component of SWI/SNF chromatin remodeling complexes that carry out key enzymatic activities, changing chromatin structure by altering DNA-histone contacts within a nucleosome in an ATP-dependent manner. Belongs to the neuron-specific chromatin remodeling complex (nBAF complex), as such plays a role in remodeling mononucleosomes in an ATP-dependent fashion, and is required for postmitotic neural development and dendritic outgrowth. During neural development a switch from a stem/progenitor to a postmitotic chromatin remodeling mechanism occurs as neurons exit the cell cycle and become committed to their adult state. The transition from proliferating neural stem/progenitor cells to postmitotic neurons requires a switch in subunit composition of the npBAF and nBAF complexes. As neural progenitors exit mitosis and differentiate into neurons, npBAF complexes which contain ACTL6A/BAF53A and PHF10/BAF45A, are exchanged for homologous alternative ACTL6B/BAF53B and DPF1/BAF45B or DPF3/BAF45C subunits in neuron-specific complexes (nBAF). The npBAF complex is essential for the self-renewal/proliferative capacity of the multipotent neural stem cells. The nBAF complex along with CREST plays a role regulating the activity of genes essential for dendrite growth. ACTL6B/BAF53B is not essential for assembly of the nBAF complex but is required for targeting the complex and CREST to the promoter of genes essential for dendritic growth. Essential for neuronal maturation and dendrite development. This is Actin-like protein 6B (ACTL6B) from Bos taurus (Bovine).